Consider the following 163-residue polypeptide: Methyl-CpG-binding domain-containing protein 3 (163 aa).

Residues 6–56 (TTLIDSYAAQCWKCLKVRSIESQEDYEEIRSKTLEKFFECKRCEEPGDMVM) form a CW-type zinc finger. One can recognise an MBD domain in the interval 65 to 137 (WFQDEHSIPK…EEVSFAAPKR (73 aa)). Positions 140-163 (LKKKPVDSHSSSRNTEEDGVSRDA) are disordered. Over residues 153-163 (NTEEDGVSRDA) the composition is skewed to basic and acidic residues.

Its subcellular location is the nucleus. In terms of biological role, probable transcriptional regulator. This Arabidopsis thaliana (Mouse-ear cress) protein is Methyl-CpG-binding domain-containing protein 3 (MBD3).